A 120-amino-acid polypeptide reads, in one-letter code: Large ribosomal subunit protein bL19 (120 aa).

The protein belongs to the bacterial ribosomal protein bL19 family.

Functionally, this protein is located at the 30S-50S ribosomal subunit interface and may play a role in the structure and function of the aminoacyl-tRNA binding site. The polypeptide is Large ribosomal subunit protein bL19 (Chlorobium limicola (strain DSM 245 / NBRC 103803 / 6330)).